Consider the following 607-residue polypeptide: NAD-dependent malic enzyme 2, mitochondrial (607 aa).

Residues 1–32 constitute a mitochondrion transit peptide; the sequence is MMWKNIAGLSKAAAAARTHGSRRCFSTAIPGP. Tyr136 (proton donor) is an active-site residue. NAD(+) is bound at residue Arg189. The active-site Proton acceptor is the Lys207. Positions 278, 279, and 302 each coordinate a divalent metal cation. Asp302 and Asn449 together coordinate NAD(+).

Belongs to the malic enzymes family. In terms of assembly, homodimer. Heterodimer of two related subunits in NAD-MEH complex. Interacts with NAD-ME1. Mg(2+) is required as a cofactor. Requires Mn(2+) as cofactor. As to expression, expressed in leaves, stems, flowers, and roots (at protein level). Present in pollen.

It localises to the mitochondrion. It catalyses the reaction (S)-malate + NAD(+) = pyruvate + CO2 + NADH. Its activity is regulated as follows. Activated by 2-ketoglutarate, phosphoenolpyruvate (PEP), fructose 1,6-biphosphate (FBP) and coenzyme A (acetyl-CoA and CoA) as homodimer and by oxaloacetate (OAA), 2-ketoglutarate, succinate, fumarate and CoA as heterodimer NAD-MEH. Repressed by succinate and fumarate as homodimer, in the presence of NAD(+) and competitively toward the substrate L-malate. Involved in the regulation of sugars and amino acids metabolisms during the night period. The protein is NAD-dependent malic enzyme 2, mitochondrial (NAD-ME2) of Arabidopsis thaliana (Mouse-ear cress).